A 513-amino-acid polypeptide reads, in one-letter code: Tigger transposable element-derived protein 4 (513 aa).

The HTH psq-type domain maps to 12–63 (PVTVKKKKSLSIEEKIDIINAVESGKKKAEIAAEYGIKKNSLSSIMKNKDKV). DNA-binding regions (H-T-H motif) lie at residues 39–59 (KAEI…IMKN) and 108–139 (PMLR…FKSR). One can recognise an HTH CENPB-type domain in the interval 75–146 (KRKRLRTAFY…KSRYGLVFRA (72 aa)). Residues 174 to 375 (YHPKNVFNVK…VTPETIVKSY (202 aa)) enclose the DDE-1 domain. The segment covering 433-448 (TQKDDAEWAGESKQDE) has biased composition (basic and acidic residues). The tract at residues 433-473 (TQKDDAEWAGESKQDETGLYTSDEEEEDSGALEVDLPSPSK) is disordered.

The protein belongs to the tigger transposable element derived protein family.

It localises to the nucleus. In Mus musculus (Mouse), this protein is Tigger transposable element-derived protein 4 (Tigd4).